Reading from the N-terminus, the 350-residue chain is Tetraacyldisaccharide 4'-kinase (350 aa).

Position 48–55 (48–55 (SAGGTGKT)) interacts with ATP.

Belongs to the LpxK family.

It carries out the reaction a lipid A disaccharide + ATP = a lipid IVA + ADP + H(+). Its pathway is glycolipid biosynthesis; lipid IV(A) biosynthesis; lipid IV(A) from (3R)-3-hydroxytetradecanoyl-[acyl-carrier-protein] and UDP-N-acetyl-alpha-D-glucosamine: step 6/6. In terms of biological role, transfers the gamma-phosphate of ATP to the 4'-position of a tetraacyldisaccharide 1-phosphate intermediate (termed DS-1-P) to form tetraacyldisaccharide 1,4'-bis-phosphate (lipid IVA). This Chlorobium limicola (strain DSM 245 / NBRC 103803 / 6330) protein is Tetraacyldisaccharide 4'-kinase.